A 611-amino-acid polypeptide reads, in one-letter code: Dihydroxy-acid dehydratase (611 aa).

D81 is a binding site for Mg(2+). Residue C122 participates in [2Fe-2S] cluster binding. Mg(2+) is bound by residues D123 and K124. K124 bears the N6-carboxylysine mark. C195 lines the [2Fe-2S] cluster pocket. E491 provides a ligand contact to Mg(2+). Residue S517 is the Proton acceptor of the active site.

It belongs to the IlvD/Edd family. In terms of assembly, homodimer. It depends on [2Fe-2S] cluster as a cofactor. Mg(2+) serves as cofactor.

It catalyses the reaction (2R)-2,3-dihydroxy-3-methylbutanoate = 3-methyl-2-oxobutanoate + H2O. The enzyme catalyses (2R,3R)-2,3-dihydroxy-3-methylpentanoate = (S)-3-methyl-2-oxopentanoate + H2O. It participates in amino-acid biosynthesis; L-isoleucine biosynthesis; L-isoleucine from 2-oxobutanoate: step 3/4. Its pathway is amino-acid biosynthesis; L-valine biosynthesis; L-valine from pyruvate: step 3/4. Its function is as follows. Functions in the biosynthesis of branched-chain amino acids. Catalyzes the dehydration of (2R,3R)-2,3-dihydroxy-3-methylpentanoate (2,3-dihydroxy-3-methylvalerate) into 2-oxo-3-methylpentanoate (2-oxo-3-methylvalerate) and of (2R)-2,3-dihydroxy-3-methylbutanoate (2,3-dihydroxyisovalerate) into 2-oxo-3-methylbutanoate (2-oxoisovalerate), the penultimate precursor to L-isoleucine and L-valine, respectively. This chain is Dihydroxy-acid dehydratase, found in Brucella anthropi (strain ATCC 49188 / DSM 6882 / CCUG 24695 / JCM 21032 / LMG 3331 / NBRC 15819 / NCTC 12168 / Alc 37) (Ochrobactrum anthropi).